The sequence spans 352 residues: Probable dual-specificity RNA methyltransferase RlmN (352 aa).

The active-site Proton acceptor is E99. A Radical SAM core domain is found at 105 to 325 (EGDRATLCIS…ESHGYTCTIR (221 aa)). A disulfide bridge links C112 with C336. [4Fe-4S] cluster is bound by residues C119, C123, and C126. S-adenosyl-L-methionine is bound by residues 164–165 (GE), S196, 217–219 (SLH), and H293. C336 (S-methylcysteine intermediate) is an active-site residue.

This sequence belongs to the radical SAM superfamily. RlmN family. Requires [4Fe-4S] cluster as cofactor.

The protein resides in the cytoplasm. It carries out the reaction adenosine(2503) in 23S rRNA + 2 reduced [2Fe-2S]-[ferredoxin] + 2 S-adenosyl-L-methionine = 2-methyladenosine(2503) in 23S rRNA + 5'-deoxyadenosine + L-methionine + 2 oxidized [2Fe-2S]-[ferredoxin] + S-adenosyl-L-homocysteine. The catalysed reaction is adenosine(37) in tRNA + 2 reduced [2Fe-2S]-[ferredoxin] + 2 S-adenosyl-L-methionine = 2-methyladenosine(37) in tRNA + 5'-deoxyadenosine + L-methionine + 2 oxidized [2Fe-2S]-[ferredoxin] + S-adenosyl-L-homocysteine. In terms of biological role, specifically methylates position 2 of adenine 2503 in 23S rRNA and position 2 of adenine 37 in tRNAs. The polypeptide is Probable dual-specificity RNA methyltransferase RlmN (Porphyromonas gingivalis (strain ATCC 33277 / DSM 20709 / CIP 103683 / JCM 12257 / NCTC 11834 / 2561)).